The sequence spans 130 residues: Peptidyl-prolyl cis-trans isomerase pin4 (130 aa).

The disordered stretch occupies residues 1–38; it reads MGKDKKASGSGSGSKGGKDAGNKDAGKDAGKASKGAQS. Residues 16-31 show a composition bias toward basic and acidic residues; that stretch reads GGKDAGNKDAGKDAGK. Residues 36 to 128 form the PpiC domain; the sequence is AQSINVRHIL…FGYHIIMVEG (93 aa).

Belongs to the PpiC/parvulin rotamase family. PIN4 subfamily.

It carries out the reaction [protein]-peptidylproline (omega=180) = [protein]-peptidylproline (omega=0). Functionally, PPIases accelerate the folding of proteins. It catalyzes the cis-trans isomerization of proline imidic peptide bonds in oligopeptides. This is Peptidyl-prolyl cis-trans isomerase pin4 (ppi-5) from Neurospora crassa (strain ATCC 24698 / 74-OR23-1A / CBS 708.71 / DSM 1257 / FGSC 987).